The sequence spans 253 residues: Sulfoacetaldehyde reductase (253 aa).

6 to 30 provides a ligand contact to NADP(+); it reads FITGATSGFGRAAAHRFAAAGWSLV. A substrate-binding site is contributed by serine 139. Tyrosine 152 serves as the catalytic Proton acceptor.

It belongs to the short-chain dehydrogenases/reductases (SDR) family. As to quaternary structure, homodimer and heterotetramer.

The catalysed reaction is 2-hydroxyethane-1-sulfonate + NADP(+) = sulfoacetaldehyde + NADPH + H(+). It participates in organosulfur degradation. Catalyzes the formation of isethionate from 2-sulfoacetaldehyde in the deaminative pathway of taurine. The enzyme is specific for NADPH; NADH is not a substrate. Responsible for most of the activity observed in taurine-grown cells. This chain is Sulfoacetaldehyde reductase (isfD), found in Chromohalobacter salexigens (strain ATCC BAA-138 / DSM 3043 / CIP 106854 / NCIMB 13768 / 1H11).